The following is a 160-amino-acid chain: Cytochrome b6-f complex subunit 4 (160 aa).

Transmembrane regions (helical) follow at residues 36–56 (LLYM…GLSV), 95–115 (LLGV…PFIE), and 131–151 (ILFL…TFPI).

It belongs to the cytochrome b family. PetD subfamily. In terms of assembly, the 4 large subunits of the cytochrome b6-f complex are cytochrome b6, subunit IV (17 kDa polypeptide, petD), cytochrome f and the Rieske protein, while the 4 small subunits are petG, petL, petM and petN. The complex functions as a dimer. Post-translationally, the N-terminus is blocked.

It localises to the plastid. Its subcellular location is the chloroplast thylakoid membrane. Component of the cytochrome b6-f complex, which mediates electron transfer between photosystem II (PSII) and photosystem I (PSI), cyclic electron flow around PSI, and state transitions. The polypeptide is Cytochrome b6-f complex subunit 4 (Chlamydomonas reinhardtii (Chlamydomonas smithii)).